Here is a 183-residue protein sequence, read N- to C-terminus: Dual-action ribosomal maturation protein DarP (183 aa).

The protein belongs to the DarP family.

It is found in the cytoplasm. In terms of biological role, member of a network of 50S ribosomal subunit biogenesis factors which assembles along the 30S-50S interface, preventing incorrect 23S rRNA structures from forming. Promotes peptidyl transferase center (PTC) maturation. This Salmonella gallinarum (strain 287/91 / NCTC 13346) protein is Dual-action ribosomal maturation protein DarP.